We begin with the raw amino-acid sequence, 350 residues long: Guanine nucleotide-binding protein G(t) subunit alpha-1 (350 aa).

Residues 1–21 form a disordered region; that stretch reads MGAGASAEEKHSRELEKKLKE. Glycine 2 carries the N-myristoyl glycine lipid modification. Positions 7–21 are enriched in basic and acidic residues; the sequence is AEEKHSRELEKKLKE. The 323-residue stretch at 28–350 folds into the G-alpha domain; sequence RTVKLLLLGA…KENLKDCGLF (323 aa). The segment at 31-44 is G1 motif; that stretch reads KLLLLGAGESGKST. Position 36–43 (36–43) interacts with GTP; it reads GAGESGKS. Position 43 (serine 43) interacts with Mg(2+). Phosphotyrosine is present on tyrosine 142. GTP is bound by residues aspartate 146, 171–177, glycine 199, 265–268, and alanine 322; these read LRSRVKT and NKKD. Residues 169 to 177 are G2 motif; the sequence is DVLRSRVKT. Mg(2+) is bound at residue threonine 177. Residues 192-201 are G3 motif; that stretch reads FRMFDVGGQR. The tract at residues 261 to 268 is G4 motif; it reads VLFLNKKD. The G5 motif stretch occupies residues 320–325; sequence TCATDT. The segment at 340 to 350 is interaction with RHO; sequence IKENLKDCGLF.

This sequence belongs to the G-alpha family. G(i/o/t/z) subfamily. Heterotrimeric G proteins are composed of 3 subunits alpha, beta and gamma. The alpha chain contains the guanine nucleotide binding site. Interacts with RHO. Interacts with RGS9 and PDE6G. Interacts (when myristoylated) with UNC119; interaction is required for localization in sensory neurons. As to expression, in the retina, expressed in the rod photoreceptors.

The protein localises to the cell projection. Its subcellular location is the cilium. It is found in the photoreceptor outer segment. It localises to the membrane. The protein resides in the photoreceptor inner segment. In terms of biological role, functions as a signal transducer for the rod photoreceptor RHO. Required for normal RHO-mediated light perception by the retina. Guanine nucleotide-binding proteins (G proteins) function as transducers downstream of G protein-coupled receptors (GPCRs), such as the photoreceptor RHO. The alpha chain contains the guanine nucleotide binding site and alternates between an active, GTP-bound state and an inactive, GDP-bound state. Activated RHO promotes GDP release and GTP binding. Signaling is mediated via downstream effector proteins, such as cGMP-phosphodiesterase. This is Guanine nucleotide-binding protein G(t) subunit alpha-1 (Gnat1) from Mus musculus (Mouse).